The following is a 436-amino-acid chain: Citrate synthase (436 aa).

Catalysis depends on residues His311 and Asp370.

Belongs to the citrate synthase family. As to quaternary structure, homohexamer.

It carries out the reaction oxaloacetate + acetyl-CoA + H2O = citrate + CoA + H(+). Its pathway is carbohydrate metabolism; tricarboxylic acid cycle; isocitrate from oxaloacetate: step 1/2. Allosterically inhibited by NADH. This Rickettsia prowazekii (strain Madrid E) protein is Citrate synthase (gltA).